We begin with the raw amino-acid sequence, 219 residues long: Thymidylate kinase (219 aa).

Position 7–14 (G7–S14) interacts with ATP.

The protein belongs to the thymidylate kinase family.

The enzyme catalyses dTMP + ATP = dTDP + ADP. Functionally, phosphorylation of dTMP to form dTDP in both de novo and salvage pathways of dTTP synthesis. This Chlorobium phaeobacteroides (strain DSM 266 / SMG 266 / 2430) protein is Thymidylate kinase.